A 194-amino-acid chain; its full sequence is Adenylate kinase (194 aa).

8-16 contributes to the ATP binding site; sequence GIPGVGKST.

It belongs to the archaeal adenylate kinase family. Homotrimer.

The protein resides in the cytoplasm. It catalyses the reaction AMP + ATP = 2 ADP. This is Adenylate kinase (adkA) from Sulfolobus acidocaldarius (strain ATCC 33909 / DSM 639 / JCM 8929 / NBRC 15157 / NCIMB 11770).